We begin with the raw amino-acid sequence, 121 residues long: Small ribosomal subunit protein bS16 (121 aa).

Residues 88–121 are disordered; the sequence is GKAKLEKEKKAKAKTKEEENEGSKTESGSNEAES. Residues 90-111 are compositionally biased toward basic and acidic residues; the sequence is AKLEKEKKAKAKTKEEENEGSK. A compositionally biased stretch (polar residues) spans 112–121; the sequence is TESGSNEAES.

The protein belongs to the bacterial ribosomal protein bS16 family.

The sequence is that of Small ribosomal subunit protein bS16 from Prochlorococcus marinus (strain MIT 9215).